A 213-amino-acid chain; its full sequence is Putative tRNA methyltransferase MPN_351 (213 aa).

Belongs to the TrmK family.

It is found in the cytoplasm. This is Putative tRNA methyltransferase MPN_351 from Mycoplasma pneumoniae (strain ATCC 29342 / M129 / Subtype 1) (Mycoplasmoides pneumoniae).